The chain runs to 469 residues: Carboxypeptidase Q (469 aa).

Residues 1 to 19 form the signal peptide; that stretch reads MKTLILTLLSLYELQLCCG. The propeptide occupies 20–42; the sequence is AYNQNIRSQRKFEMIKTEISSYK. N-linked (GlcNAc...) asparagine glycosylation is found at N59 and N159. H288 and D300 together coordinate Zn(2+). E334 serves as the catalytic Nucleophile. E335 provides a ligand contact to Zn(2+). N351 carries N-linked (GlcNAc...) asparagine glycosylation. Residue D362 coordinates Zn(2+). N-linked (GlcNAc...) asparagine glycosylation occurs at N394. H432 contacts Zn(2+).

It belongs to the peptidase M28 family. In terms of assembly, homodimer. The monomeric form is inactive while the homodimer is active.

It is found in the endoplasmic reticulum. Its subcellular location is the golgi apparatus. It localises to the lysosome. The protein localises to the secreted. In terms of biological role, carboxypeptidase that may play an important role in the hydrolysis of circulating peptides. Catalyzes more efficiently the hydrolysis of dipeptides with unsubstituted terminals into amino acids. The chain is Carboxypeptidase Q (cpq) from Xenopus laevis (African clawed frog).